Here is a 419-residue protein sequence, read N- to C-terminus: Tyrosine--tRNA ligase (419 aa).

Y34 is an L-tyrosine binding site. The 'HIGH' region motif lies at 39 to 48; the sequence is PTADSLHIGH. L-tyrosine is bound by residues Y169, Q173, and D176. A 'KMSKS' region motif is present at residues 230–234; that stretch reads KFGKT. ATP is bound at residue K233. The region spanning 352-419 is the S4 RNA-binding domain; that stretch reads VPLVELLVSA…KKKYYLIRYA (68 aa).

The protein belongs to the class-I aminoacyl-tRNA synthetase family. TyrS type 1 subfamily. In terms of assembly, homodimer.

It is found in the cytoplasm. The catalysed reaction is tRNA(Tyr) + L-tyrosine + ATP = L-tyrosyl-tRNA(Tyr) + AMP + diphosphate + H(+). Catalyzes the attachment of tyrosine to tRNA(Tyr) in a two-step reaction: tyrosine is first activated by ATP to form Tyr-AMP and then transferred to the acceptor end of tRNA(Tyr). The sequence is that of Tyrosine--tRNA ligase (tyrS) from Geobacillus stearothermophilus (Bacillus stearothermophilus).